A 199-amino-acid chain; its full sequence is Adenylyl-sulfate kinase (199 aa).

34-41 (GLSGSGKS) is a binding site for ATP. The active-site Phosphoserine intermediate is the serine 108.

It belongs to the APS kinase family.

The catalysed reaction is adenosine 5'-phosphosulfate + ATP = 3'-phosphoadenylyl sulfate + ADP + H(+). Its pathway is sulfur metabolism; hydrogen sulfide biosynthesis; sulfite from sulfate: step 2/3. Catalyzes the synthesis of activated sulfate. The polypeptide is Adenylyl-sulfate kinase (Oceanobacillus iheyensis (strain DSM 14371 / CIP 107618 / JCM 11309 / KCTC 3954 / HTE831)).